We begin with the raw amino-acid sequence, 680 residues long: Penicillin-binding protein 2B (680 aa).

The Cytoplasmic portion of the chain corresponds to 1–8 (MRKFNSHS). The helical transmembrane segment at 9–29 (IPIRLNLLFSIVILLFMTIIG) threads the bilayer. Over 30–680 (RLLYMQVLNK…NLYQKYHPMN (651 aa)) the chain is Extracellular. Serine 386 serves as the catalytic Acyl-ester intermediate.

It belongs to the transpeptidase family. Interacts with MreC in the elongasome.

The protein resides in the cell membrane. In terms of biological role, a transpeptidase that forms peptide cross-links between adjacent glycan strands in cell wall peptidoglycan (PG). Part of the elongasome machinery that synthesizes peripheral PG. This is Penicillin-binding protein 2B from Streptococcus pneumoniae serotype 2 (strain D39 / NCTC 7466).